The chain runs to 242 residues: UPF0246 protein SPCG_1533 (242 aa).

This sequence belongs to the UPF0246 family.

The protein is UPF0246 protein SPCG_1533 of Streptococcus pneumoniae (strain CGSP14).